A 180-amino-acid polypeptide reads, in one-letter code: Large ribosomal subunit protein uL5 (180 aa).

The protein belongs to the universal ribosomal protein uL5 family. Part of the 50S ribosomal subunit; part of the 5S rRNA/L5/L18/L25 subcomplex. Contacts the 5S rRNA and the P site tRNA. Forms a bridge to the 30S subunit in the 70S ribosome.

This is one of the proteins that bind and probably mediate the attachment of the 5S RNA into the large ribosomal subunit, where it forms part of the central protuberance. In the 70S ribosome it contacts protein S13 of the 30S subunit (bridge B1b), connecting the 2 subunits; this bridge is implicated in subunit movement. Contacts the P site tRNA; the 5S rRNA and some of its associated proteins might help stabilize positioning of ribosome-bound tRNAs. The protein is Large ribosomal subunit protein uL5 of Brevibacillus brevis (strain 47 / JCM 6285 / NBRC 100599).